Here is a 185-residue protein sequence, read N- to C-terminus: MSKEVLTKSKEKMDKAEQALTRQLGTIRAGRANASLLDRLSVDYYGAPTPVNQMASISVPEARMLLITPYDKTVLGEIEKAILKSDLGLTPNNDGSVLRLSIPQLTEERRKELVKEVKKEAEEAKVAVRNIRREANEELKKLEKNGDITEDDLRSYGEDVQKLTDESIKNIDNITKDKEAEILEV.

The protein belongs to the RRF family.

It is found in the cytoplasm. In terms of biological role, responsible for the release of ribosomes from messenger RNA at the termination of protein biosynthesis. May increase the efficiency of translation by recycling ribosomes from one round of translation to another. This Listeria welshimeri serovar 6b (strain ATCC 35897 / DSM 20650 / CCUG 15529 / CIP 8149 / NCTC 11857 / SLCC 5334 / V8) protein is Ribosome-recycling factor.